The chain runs to 427 residues: L-cysteine:1D-myo-inositol 2-amino-2-deoxy-alpha-D-glucopyranoside ligase (427 aa).

C46 serves as a coordination point for Zn(2+). Residues 46–49 (CGIT), T61, and 84–86 (NVT) contribute to the L-cysteinyl-5'-AMP site. The 'HIGH' region motif lies at 48-58 (ITPYDATHMGH). The short motif at 186–191 (ERGGDP) is the 'ERGGDP' region element. W233 is a binding site for L-cysteinyl-5'-AMP. C237 contributes to the Zn(2+) binding site. L-cysteinyl-5'-AMP is bound at residue 255–257 (GSD). H262 provides a ligand contact to Zn(2+). Position 289 (V289) interacts with L-cysteinyl-5'-AMP. The 'KMSKS' region motif lies at 295 to 299 (KMSKS).

The protein belongs to the class-I aminoacyl-tRNA synthetase family. MshC subfamily. Monomer. The cofactor is Zn(2+).

The catalysed reaction is 1D-myo-inositol 2-amino-2-deoxy-alpha-D-glucopyranoside + L-cysteine + ATP = 1D-myo-inositol 2-(L-cysteinylamino)-2-deoxy-alpha-D-glucopyranoside + AMP + diphosphate + H(+). Its function is as follows. Catalyzes the ATP-dependent condensation of GlcN-Ins and L-cysteine to form L-Cys-GlcN-Ins. The chain is L-cysteine:1D-myo-inositol 2-amino-2-deoxy-alpha-D-glucopyranoside ligase from Catenulispora acidiphila (strain DSM 44928 / JCM 14897 / NBRC 102108 / NRRL B-24433 / ID139908).